Reading from the N-terminus, the 206-residue chain is Urease accessory protein UreG (206 aa).

13–20 (GPVGSGKT) contacts GTP.

This sequence belongs to the SIMIBI class G3E GTPase family. UreG subfamily. In terms of assembly, homodimer. UreD, UreF and UreG form a complex that acts as a GTP-hydrolysis-dependent molecular chaperone, activating the urease apoprotein by helping to assemble the nickel containing metallocenter of UreC. The UreE protein probably delivers the nickel.

The protein localises to the cytoplasm. Functionally, facilitates the functional incorporation of the urease nickel metallocenter. This process requires GTP hydrolysis, probably effectuated by UreG. This is Urease accessory protein UreG from Haloquadratum walsbyi (strain DSM 16790 / HBSQ001).